Here is a 274-residue protein sequence, read N- to C-terminus: Diaminopimelate epimerase (274 aa).

Positions 11, 44, and 64 each coordinate substrate. The active-site Proton donor is the Cys-73. Residues 74–75 (GN), Asn-157, Asn-190, and 208–209 (ER) each bind substrate. Catalysis depends on Cys-217, which acts as the Proton acceptor. 218 to 219 (GS) lines the substrate pocket.

This sequence belongs to the diaminopimelate epimerase family. In terms of assembly, homodimer.

The protein localises to the cytoplasm. It carries out the reaction (2S,6S)-2,6-diaminopimelate = meso-2,6-diaminopimelate. Its pathway is amino-acid biosynthesis; L-lysine biosynthesis via DAP pathway; DL-2,6-diaminopimelate from LL-2,6-diaminopimelate: step 1/1. In terms of biological role, catalyzes the stereoinversion of LL-2,6-diaminopimelate (L,L-DAP) to meso-diaminopimelate (meso-DAP), a precursor of L-lysine and an essential component of the bacterial peptidoglycan. This is Diaminopimelate epimerase from Proteus mirabilis (strain HI4320).